We begin with the raw amino-acid sequence, 244 residues long: 23S rRNA (guanosine-2'-O-)-methyltransferase RlmB (244 aa).

Residues glycine 196, isoleucine 216, and leucine 225 each coordinate S-adenosyl-L-methionine.

The protein belongs to the class IV-like SAM-binding methyltransferase superfamily. RNA methyltransferase TrmH family. RlmB subfamily. As to quaternary structure, homodimer.

It is found in the cytoplasm. The enzyme catalyses guanosine(2251) in 23S rRNA + S-adenosyl-L-methionine = 2'-O-methylguanosine(2251) in 23S rRNA + S-adenosyl-L-homocysteine + H(+). Its function is as follows. Specifically methylates the ribose of guanosine 2251 in 23S rRNA. The protein is 23S rRNA (guanosine-2'-O-)-methyltransferase RlmB of Photorhabdus laumondii subsp. laumondii (strain DSM 15139 / CIP 105565 / TT01) (Photorhabdus luminescens subsp. laumondii).